A 559-amino-acid polypeptide reads, in one-letter code: Urocanate hydratase (559 aa).

NAD(+)-binding positions include 53–54 (GG), Gln-131, 177–179 (GMG), Glu-197, Arg-202, 243–244 (NA), 264–268 (QTSAH), 274–275 (YL), and Tyr-323. Cys-411 is an active-site residue. Gly-493 provides a ligand contact to NAD(+).

It belongs to the urocanase family. Requires NAD(+) as cofactor.

The protein resides in the cytoplasm. It carries out the reaction 4-imidazolone-5-propanoate = trans-urocanate + H2O. It functions in the pathway amino-acid degradation; L-histidine degradation into L-glutamate; N-formimidoyl-L-glutamate from L-histidine: step 2/3. In terms of biological role, catalyzes the conversion of urocanate to 4-imidazolone-5-propionate. The sequence is that of Urocanate hydratase from Pseudomonas aeruginosa (strain LESB58).